The chain runs to 173 residues: Large ribosomal RNA subunit accumulation protein YceD (173 aa).

It belongs to the DUF177 domain family.

Plays a role in synthesis, processing and/or stability of 23S rRNA. In Salmonella typhi, this protein is Large ribosomal RNA subunit accumulation protein YceD (yceD).